Reading from the N-terminus, the 1041-residue chain is Probable rhamnogalacturonate lyase C (1041 aa).

The first 21 residues, 1 to 21 (MFASTLRKTFVFLGLATYSAA), serve as a signal peptide directing secretion. N-linked (GlcNAc...) asparagine glycosylation is found at Asn28, Asn94, Asn116, Asn142, Asn231, Asn283, Asn528, and Asn634. Residues 703-728 (ISRPCPRKGGTRRRKKERKKEGKKQG) form a disordered region. The segment covering 707–720 (CPRKGGTRRRKKER) has biased composition (basic residues). Asn864 carries N-linked (GlcNAc...) asparagine glycosylation.

Belongs to the polysaccharide lyase 4 family.

It localises to the secreted. The catalysed reaction is Endotype eliminative cleavage of L-alpha-rhamnopyranosyl-(1-&gt;4)-alpha-D-galactopyranosyluronic acid bonds of rhamnogalacturonan I domains in ramified hairy regions of pectin leaving L-rhamnopyranose at the reducing end and 4-deoxy-4,5-unsaturated D-galactopyranosyluronic acid at the non-reducing end.. Functionally, pectinolytic enzymes consist of four classes of enzymes: pectin lyase, polygalacturonase, pectin methylesterase and rhamnogalacturonase. Degrades the rhamnogalacturonan I (RG-I) backbone of pectin. The chain is Probable rhamnogalacturonate lyase C (rglC) from Emericella nidulans (strain FGSC A4 / ATCC 38163 / CBS 112.46 / NRRL 194 / M139) (Aspergillus nidulans).